A 194-amino-acid chain; its full sequence is Ion-translocating oxidoreductase complex subunit B (194 aa).

The interval 1 to 26 (MSSILIAVIAIAALALVFGLILGFAS) is hydrophobic. Residues 32–90 (ESDPIVEQIDAILPQTQCGQCGYPGCKPYAEAIANGDMINKCPPGGQATIEKLADLMGV) form the 4Fe-4S domain. [4Fe-4S] cluster-binding residues include Cys-49, Cys-52, Cys-57, Cys-73, Cys-114, Cys-117, Cys-120, Cys-124, Cys-144, Cys-147, Cys-150, and Cys-154. 4Fe-4S ferredoxin-type domains lie at 105–134 (KVAFIHEDMCIGCTKCIQACPVDAIVGGTK) and 135–164 (ALHTVIESECTGCDLCVAPCPTDCIEMIPV).

This sequence belongs to the 4Fe4S bacterial-type ferredoxin family. RnfB subfamily. The complex is composed of six subunits: RnfA, RnfB, RnfC, RnfD, RnfE and RnfG. The cofactor is [4Fe-4S] cluster.

It is found in the cell inner membrane. Functionally, part of a membrane-bound complex that couples electron transfer with translocation of ions across the membrane. The protein is Ion-translocating oxidoreductase complex subunit B of Aliivibrio fischeri (strain ATCC 700601 / ES114) (Vibrio fischeri).